The following is a 99-amino-acid chain: Nucleoid-associated protein SAG1747 (99 aa).

Residues methionine 1–glutamine 10 show a composition bias toward low complexity. A disordered region spans residues methionine 1–glutamine 20.

It belongs to the YbaB/EbfC family. Homodimer.

The protein resides in the cytoplasm. It localises to the nucleoid. Functionally, binds to DNA and alters its conformation. May be involved in regulation of gene expression, nucleoid organization and DNA protection. The chain is Nucleoid-associated protein SAG1747 from Streptococcus agalactiae serotype V (strain ATCC BAA-611 / 2603 V/R).